The chain runs to 102 residues: ATP-dependent Clp protease adapter protein ClpS (102 aa).

The protein belongs to the ClpS family. As to quaternary structure, binds to the N-terminal domain of the chaperone ClpA.

Functionally, involved in the modulation of the specificity of the ClpAP-mediated ATP-dependent protein degradation. The polypeptide is ATP-dependent Clp protease adapter protein ClpS (Shewanella denitrificans (strain OS217 / ATCC BAA-1090 / DSM 15013)).